The sequence spans 1282 residues: Myosin-1 (1282 aa).

The segment at M1–V30 is disordered. The region spanning A44–D723 is the Myosin motor domain. G137–T144 serves as a coordination point for ATP. S365 carries the phosphoserine modification. Positions V412 to A494 are actin-binding. Residues L569–D590 form a disordered region. IQ domains follow at residues H727–C747 and A748–Q773. The TH1 domain occupies R781–A977. Positions S973–E1073 are disordered. The segment covering P1029–A1058 has biased composition (low complexity). Pro residues predominate over residues P1059–A1068. The region spanning P1074–Q1135 is the SH3 domain. The segment at A1237–R1282 is disordered. Positions G1252–G1269 are enriched in low complexity.

This sequence belongs to the TRAFAC class myosin-kinesin ATPase superfamily. Myosin family. Post-translationally, phosphorylation of the TEDS site (Ser-365) is required for the polarization of the actin cytoskeleton. Phosphorylation probably activates the myosin-I ATPase activity.

The protein localises to the cytoplasm. Its subcellular location is the cytoskeleton. It is found in the actin patch. Functionally, type-I myosin implicated in the organization of the actin cytoskeleton. Required for proper actin cytoskeleton polarization. At the cell cortex, assembles in patch-like structures together with proteins from the actin-polymerizing machinery and promotes actin assembly. Functions as actin nucleation-promoting factor (NPF) for the Arp2/3 complex. In Mycosarcoma maydis (Corn smut fungus), this protein is Myosin-1 (myo1).